We begin with the raw amino-acid sequence, 147 residues long: UPF0306 protein YhbP (147 aa).

This sequence belongs to the UPF0306 family.

The chain is UPF0306 protein YhbP from Escherichia coli O157:H7 (strain EC4115 / EHEC).